The chain runs to 822 residues: Stemar-13-ene synthase (822 aa).

Polar residues predominate over residues 1-10; it reads MMLLSSSYSG. A disordered region spans residues 1-29; that stretch reads MMLLSSSYSGGQFPGVSPLGTRPKRSTTV. Mg(2+)-binding residues include Asp553, Asp557, Asn698, Thr702, and Glu706. The short motif at 553 to 557 is the DDXXD motif element; it reads DDLFD.

Belongs to the terpene synthase family. The cofactor is Mg(2+).

It carries out the reaction 9alpha-copalyl diphosphate = stemar-13-ene + diphosphate. Catalyzes the conversion of syn-copalyl diphosphate to the phytoalexin precursor stemarene. The sequence is that of Stemar-13-ene synthase (KSL8) from Oryza sativa subsp. japonica (Rice).